The following is a 466-amino-acid chain: Asparagine--tRNA ligase (466 aa).

Belongs to the class-II aminoacyl-tRNA synthetase family. In terms of assembly, homodimer.

The protein localises to the cytoplasm. The catalysed reaction is tRNA(Asn) + L-asparagine + ATP = L-asparaginyl-tRNA(Asn) + AMP + diphosphate + H(+). The sequence is that of Asparagine--tRNA ligase from Serratia proteamaculans (strain 568).